We begin with the raw amino-acid sequence, 305 residues long: tRNA uridine(34) hydroxylase (305 aa).

One can recognise a Rhodanese domain in the interval 125 to 219 (ADENTVVVDT…YLEEVPREQS (95 aa)). Cysteine 179 functions as the Cysteine persulfide intermediate in the catalytic mechanism.

It belongs to the TrhO family.

It carries out the reaction uridine(34) in tRNA + AH2 + O2 = 5-hydroxyuridine(34) in tRNA + A + H2O. In terms of biological role, catalyzes oxygen-dependent 5-hydroxyuridine (ho5U) modification at position 34 in tRNAs. The polypeptide is tRNA uridine(34) hydroxylase (Brucella ovis (strain ATCC 25840 / 63/290 / NCTC 10512)).